A 282-amino-acid chain; its full sequence is MKLIESIEEMQSTAINARQAGKTVALVPTMGYLHAGHASLMDEGRKRADILVASIFVNPTQFGAGEDFNTYPRDLEKDKLIAKAAGVDYIFAPKASDMYPTGYQTYVNVEKLTRPLCGASRPGHFRGVTTVVAKLFNIVMPHLALFGKKDFQQLTVIRRMAADLNMTVQIVGMPIVRESDGLAMSSRNAYLSQAERQSALCLSLALQSVRGAFRSGERSVEALRKLALDIINAEAFAVIDYVEFYHEATLTEVEQADDRTLVALAVKIGKTRLIDNCVLGED.

30 to 37 serves as a coordination point for ATP; it reads MGYLHAGH. Histidine 37 acts as the Proton donor in catalysis. Glutamine 61 is a (R)-pantoate binding site. Glutamine 61 lines the beta-alanine pocket. 147 to 150 contributes to the ATP binding site; sequence GKKD. Position 153 (glutamine 153) interacts with (R)-pantoate. Residues valine 176 and 184–187 each bind ATP; that span reads MSSR.

The protein belongs to the pantothenate synthetase family. In terms of assembly, homodimer.

The protein localises to the cytoplasm. The catalysed reaction is (R)-pantoate + beta-alanine + ATP = (R)-pantothenate + AMP + diphosphate + H(+). Its pathway is cofactor biosynthesis; (R)-pantothenate biosynthesis; (R)-pantothenate from (R)-pantoate and beta-alanine: step 1/1. In terms of biological role, catalyzes the condensation of pantoate with beta-alanine in an ATP-dependent reaction via a pantoyl-adenylate intermediate. This chain is Pantothenate synthetase, found in Geotalea uraniireducens (strain Rf4) (Geobacter uraniireducens).